Reading from the N-terminus, the 253-residue chain is L-cysteine S-thiosulfotransferase subunit SoxA (253 aa).

Residues 1 to 17 (MGKWVTIIFVLFLYAIA) form the signal peptide. The Cytochrome c domain maps to 44 to 129 (VYAEQGRDMF…SIATYVATLS (86 aa)). 7 residues coordinate heme c: Cys-64, Cys-67, His-68, Cys-102, Cys-165, Cys-168, and His-169. Arg-210 is a substrate binding site. Cys-214 is a binding site for heme c. The Cysteine persulfide intermediate role is filled by Cys-214.

It belongs to the SoxA family. In terms of assembly, heterodimer of SoxA and SoxX. Heme c serves as cofactor. Post-translationally, cysteine persulfide at Cys-214.

It localises to the periplasm. It carries out the reaction L-cysteinyl-[SoxY protein] + thiosulfate + 2 Fe(III)-[cytochrome c] = S-sulfosulfanyl-L-cysteinyl-[SoxY protein] + 2 Fe(II)-[cytochrome c] + 2 H(+). It catalyses the reaction S-sulfanyl-L-cysteinyl-[SoxY protein] + thiosulfate + 2 Fe(III)-[cytochrome c] = S-(2-sulfodisulfanyl)-L-cysteinyl-[SoxY protein] + 2 Fe(II)-[cytochrome c] + 2 H(+). C-type diheme cytochrome, which is part of the SoxAX cytochrome complex involved in sulfur oxidation. The SoxAX complex catalyzes the formation of a heterodisulfide bond between the conserved cysteine residue on a sulfur carrier SoxYZ complex subunit SoxY and thiosulfate or other inorganic sulfur substrates. This leads to the liberation of two electrons, which may be transferred from the SoxAX complex to another cytochrome c that then channels them into the respiratory electron transport chain. Some electrons may be used for reductive CO(2) fixation. In Hydrogenobacter thermophilus (strain DSM 6534 / IAM 12695 / TK-6), this protein is L-cysteine S-thiosulfotransferase subunit SoxA.